The following is a 1141-amino-acid chain: MSKKFAEYSQFDLSKVNKDVLKKWDENQVFAKSMTEREGCPSFVFFEGPPSANGMPGIHHVMARSIKDIFCRYKTMKGYQVKRKAGWDTHGLPVELGVEKSLGITKEDIGKTISVAEYNAHCRQDVMKFTKEWEDLTHKMGYWVDMKHPYITYDNRYIETLWWLLKQLYKKGLLYKGYTIQPYSPAAGTGLSSHELNQPGCYRDVKDTTVVAQFKMKNPKPEMAQWGTPYFLAWTTTPWTLPSNTALCVGPKIDYVAVQSYNAYTGQPITVVLAKALLNAHFNPKAAELKLEDYKAGDKLVPFKVIAEYKGPDLVGMEYEQLIPWVNPGEGAFRVILGDYVTTEDGTGIVHIAPTFGADDAQVAKAAGIPPLQLVNKKGELRPMVDLTGKFYTLDELDEDFIKQRVNVDLYKEYAGRFVKNAYDPNLSDQDESLDVSICMMMKVNNQAFKIEKHVHNYPHCWRTDKPVLYYPLDSWFIRSTACKERMIELNKTINWKPESTGTGRFGKWLENLNDWNLSRSRYWGTPLPIWRTEDNSDEKCIESVEELYNEIEKSVAAGYMQSNPYKDKGFVPGEYNEENYNKIDLHRPYVDDIILVSKDGKPMKREADLIDVWFDSGAMPYAQIHYPFENKELLDSHQVYPADFIAEGVDQTRGWFFTLHAIATMVFDSVSYKAVISNGLVLDKNGNKMSKRLGNAVDPFSTIEQYGSDPLRWYMITNSSPWDNLKFDVDGIEEVRRKFFGTLYNTYSFFALYANVDGFEYKEADLPMNERPEIDRWILSVLNTLVKEVDTCYNEYEPTKAGRLISDFVNDNLSNWYVRLNRKRFWGGGFTQDKLSAYQTLYTCLETVAKLMAPIAPFYADRLYSDLIGVTGRDNVVSVHLAKFPEYNEKMVDKELEAQMQMAQDVTSMVLALRRKVNIKVRQPLQCIMIPVVDEVQKAHIEAVKALIMSEVNVKEIKFVDGAAGVLVKKVKCDFKKLGPKFGKQMKAVAAAVAEMSQEAIAELEKNGKYTFDLGGAEAVIESADVEIFSEDIPGWLVANEGKLTVALEVTVTDELRREGIARELVNRIQNIRKSSGFEITDKIKLTLSKNPQTDDAVNEYNSYICNQVLGTSLTLADEVKDGTELNFDDFSLFVNVVKE.

A 'HIGH' region motif is present at residues 50–60; sequence PSANGMPGIHH. Positions 689–693 match the 'KMSKS' region motif; the sequence is KMSKR. Lysine 692 is an ATP binding site.

The protein belongs to the class-I aminoacyl-tRNA synthetase family. IleS type 2 subfamily. In terms of assembly, monomer. Zn(2+) is required as a cofactor.

It localises to the cytoplasm. The enzyme catalyses tRNA(Ile) + L-isoleucine + ATP = L-isoleucyl-tRNA(Ile) + AMP + diphosphate. Functionally, catalyzes the attachment of isoleucine to tRNA(Ile). As IleRS can inadvertently accommodate and process structurally similar amino acids such as valine, to avoid such errors it has two additional distinct tRNA(Ile)-dependent editing activities. One activity is designated as 'pretransfer' editing and involves the hydrolysis of activated Val-AMP. The other activity is designated 'posttransfer' editing and involves deacylation of mischarged Val-tRNA(Ile). The chain is Isoleucine--tRNA ligase from Bacteroides fragilis (strain ATCC 25285 / DSM 2151 / CCUG 4856 / JCM 11019 / LMG 10263 / NCTC 9343 / Onslow / VPI 2553 / EN-2).